The primary structure comprises 254 residues: MSLRILDMISVIMAVHRYDKYVDISIDSILNQTYSDFELIIIANGGDCFEIAKQLKHYTELDNRVKIYTLEIGQLSFALNYAVTKCKYSIIARMDSDDVSLPLRLEKQYMYMLQNDLEMVGTGIRLINENGEFIKELKYPNHNKINKILPFKNCFAHPTLMFKKDVILKQRGYCGGFNSEDYDLWLRILNECPNIRWDNLSECLLNYRIHNKSTQKSALAYYECASYSLREFLKKRTITNFLSCLYHFCKALIK.

It belongs to the glycosyltransferase 2 family.

It catalyses the reaction an N-acetyl-alpha-D-galactosaminyl derivative + UDP-alpha-D-galactose = a beta-D-galactosyl-(1-&gt;3)-N-acetyl-alpha-D-galactosaminyl derivative + UDP + H(+). It carries out the reaction alpha-D-GalNAc-(1-&gt;3)-alpha-D-GalNAc-di-trans,octa-cis-undecaprenyl diphosphate + UDP-alpha-D-galactose = beta-D-Gal-(1-&gt;3)-alpha-D-GalNAc-(1-&gt;3)-alpha-D-GalNAc-di-trans,octa-cis-undecaprenyl diphosphate + UDP + H(+). The protein operates within bacterial outer membrane biogenesis; LPS O-antigen biosynthesis. Functionally, involved in the assembly of the O-repeating unit during O-antigen biosynthesis. The chain is O-antigen biosynthesis glycosyltransferase WbnJ from Escherichia coli.